We begin with the raw amino-acid sequence, 155 residues long: 3-hydroxyacyl-[acyl-carrier-protein] dehydratase FabZ (155 aa).

Residue His-57 is part of the active site.

It belongs to the thioester dehydratase family. FabZ subfamily.

The protein resides in the cytoplasm. It catalyses the reaction a (3R)-hydroxyacyl-[ACP] = a (2E)-enoyl-[ACP] + H2O. Functionally, involved in unsaturated fatty acids biosynthesis. Catalyzes the dehydration of short chain beta-hydroxyacyl-ACPs and long chain saturated and unsaturated beta-hydroxyacyl-ACPs. The polypeptide is 3-hydroxyacyl-[acyl-carrier-protein] dehydratase FabZ (Sorangium cellulosum (strain So ce56) (Polyangium cellulosum (strain So ce56))).